The primary structure comprises 156 residues: dCTP deaminase (156 aa).

Residues 79-84 (RSSLAR), Asp95, Gln124, and Tyr138 each bind dCTP.

This sequence belongs to the dCTP deaminase family. As to quaternary structure, homotrimer.

It catalyses the reaction dCTP + H2O + H(+) = dUTP + NH4(+). The protein operates within pyrimidine metabolism; dUMP biosynthesis; dUMP from dCTP (dUTP route): step 1/2. In terms of biological role, catalyzes the deamination of dCTP to dUTP. The polypeptide is dCTP deaminase (Pyrococcus horikoshii (strain ATCC 700860 / DSM 12428 / JCM 9974 / NBRC 100139 / OT-3)).